Reading from the N-terminus, the 860-residue chain is Leucine--tRNA ligase (860 aa).

The 'HIGH' region signature appears at 42-52; that stretch reads PYPSGRLHMGH. The 'KMSKS' region motif lies at 619–623; it reads KMSKS. Lysine 622 is a binding site for ATP.

Belongs to the class-I aminoacyl-tRNA synthetase family.

Its subcellular location is the cytoplasm. The enzyme catalyses tRNA(Leu) + L-leucine + ATP = L-leucyl-tRNA(Leu) + AMP + diphosphate. The polypeptide is Leucine--tRNA ligase (Salmonella typhimurium (strain LT2 / SGSC1412 / ATCC 700720)).